A 632-amino-acid chain; its full sequence is MAU2 chromatid cohesion factor homolog (632 aa).

2 TPR repeats span residues 453–486 (GGFY…ANAE) and 493–526 (SCSL…ASKI).

This sequence belongs to the SCC4/mau-2 family. Interacts with Nipped-B to form the cohesin loading complex.

Its subcellular location is the nucleus. It localises to the nucleoplasm. Required for association of the cohesin complex with chromatin during interphase. Plays a role in sister chromatid cohesion and normal progression through prometaphase. The polypeptide is MAU2 chromatid cohesion factor homolog (Drosophila simulans (Fruit fly)).